Reading from the N-terminus, the 178-residue chain is Large ribosomal subunit protein uL13m (178 aa).

It belongs to the universal ribosomal protein uL13 family. In terms of assembly, component of the mitochondrial ribosome large subunit (39S) which comprises a 16S rRNA and about 50 distinct proteins. Interacts with OXA1L.

It is found in the mitochondrion. The protein is Large ribosomal subunit protein uL13m (MRPL13) of Bos taurus (Bovine).